The chain runs to 248 residues: Biosynthetic peptidoglycan transglycosylase (248 aa).

The helical transmembrane segment at 20-42 (WLRWLMAAPLLFAAASVLQVLIL) threads the bilayer.

It belongs to the glycosyltransferase 51 family.

Its subcellular location is the cell inner membrane. It carries out the reaction [GlcNAc-(1-&gt;4)-Mur2Ac(oyl-L-Ala-gamma-D-Glu-L-Lys-D-Ala-D-Ala)](n)-di-trans,octa-cis-undecaprenyl diphosphate + beta-D-GlcNAc-(1-&gt;4)-Mur2Ac(oyl-L-Ala-gamma-D-Glu-L-Lys-D-Ala-D-Ala)-di-trans,octa-cis-undecaprenyl diphosphate = [GlcNAc-(1-&gt;4)-Mur2Ac(oyl-L-Ala-gamma-D-Glu-L-Lys-D-Ala-D-Ala)](n+1)-di-trans,octa-cis-undecaprenyl diphosphate + di-trans,octa-cis-undecaprenyl diphosphate + H(+). The protein operates within cell wall biogenesis; peptidoglycan biosynthesis. Peptidoglycan polymerase that catalyzes glycan chain elongation from lipid-linked precursors. This is Biosynthetic peptidoglycan transglycosylase from Xanthomonas euvesicatoria pv. vesicatoria (strain 85-10) (Xanthomonas campestris pv. vesicatoria).